The primary structure comprises 221 residues: uncharacterized protein (221 aa).

Residues 40 to 162 are disordered; the sequence is TIEVEPSPVQ…EPPEKVELSP (123 aa). A compositionally biased stretch (polar residues) spans 47–60; it reads PVQQDNPPISSEQA. Residues 82-92 are compositionally biased toward low complexity; that stretch reads SSAQQEATAQT.

This is an uncharacterized protein from Homo sapiens (Human).